The primary structure comprises 720 residues: Fatty acid oxidation complex subunit alpha (720 aa).

Residues 1–189 (MIYQGETLSV…KLGLVDAVVA (189 aa)) form an enoyl-CoA hydratase/isomerase region. Residue aspartate 296 participates in substrate binding. The tract at residues 311–720 (QPTKKGVVLG…ESYYTQQVNA (410 aa)) is 3-hydroxyacyl-CoA dehydrogenase. Residues methionine 324, aspartate 343, 400–402 (VVE), lysine 407, and serine 429 contribute to the NAD(+) site. Residue histidine 450 is the For 3-hydroxyacyl-CoA dehydrogenase activity of the active site. NAD(+) is bound at residue asparagine 453. Residues asparagine 500 and tyrosine 660 each contribute to the substrate site.

The protein in the N-terminal section; belongs to the enoyl-CoA hydratase/isomerase family. This sequence in the C-terminal section; belongs to the 3-hydroxyacyl-CoA dehydrogenase family. As to quaternary structure, heterotetramer of two alpha chains (FadB) and two beta chains (FadA).

The catalysed reaction is a (3S)-3-hydroxyacyl-CoA + NAD(+) = a 3-oxoacyl-CoA + NADH + H(+). The enzyme catalyses a (3S)-3-hydroxyacyl-CoA = a (2E)-enoyl-CoA + H2O. It carries out the reaction a 4-saturated-(3S)-3-hydroxyacyl-CoA = a (3E)-enoyl-CoA + H2O. It catalyses the reaction (3S)-3-hydroxybutanoyl-CoA = (3R)-3-hydroxybutanoyl-CoA. The catalysed reaction is a (3Z)-enoyl-CoA = a 4-saturated (2E)-enoyl-CoA. The enzyme catalyses a (3E)-enoyl-CoA = a 4-saturated (2E)-enoyl-CoA. It functions in the pathway lipid metabolism; fatty acid beta-oxidation. Involved in the aerobic and anaerobic degradation of long-chain fatty acids via beta-oxidation cycle. Catalyzes the formation of 3-oxoacyl-CoA from enoyl-CoA via L-3-hydroxyacyl-CoA. It can also use D-3-hydroxyacyl-CoA and cis-3-enoyl-CoA as substrate. This chain is Fatty acid oxidation complex subunit alpha, found in Photobacterium profundum (strain SS9).